The primary structure comprises 337 residues: Heme A synthase (337 aa).

The next 5 helical transmembrane spans lie at 6-26 (ITKWLCISCIMVIATIVIGGI), 87-107 (FIHRLLGRITALIYIVPLIYF), 119-139 (LPYIIALLLFCIQGFIGWYMV), 154-174 (LAFHLIIAVIIYHILFYQLIK), and 192-212 (LIFSGIAITVVYVQIFLGALV). Histidine 256 serves as a coordination point for heme. The next 3 helical transmembrane spans lie at 258–278 (LVGYSVFLVVVVLIICLLKIE), 285–305 (IAYFLMIVLFMQVSTGIITLL), and 308–328 (VPIIIASIHQLFAIILLSIII). Histidine 316 lines the heme pocket.

Belongs to the COX15/CtaA family. Type 2 subfamily. Interacts with CtaB. Heme b serves as cofactor.

Its subcellular location is the cell membrane. The enzyme catalyses Fe(II)-heme o + 2 A + H2O = Fe(II)-heme a + 2 AH2. It functions in the pathway porphyrin-containing compound metabolism; heme A biosynthesis; heme A from heme O: step 1/1. Its function is as follows. Catalyzes the conversion of heme O to heme A by two successive hydroxylations of the methyl group at C8. The first hydroxylation forms heme I, the second hydroxylation results in an unstable dihydroxymethyl group, which spontaneously dehydrates, resulting in the formyl group of heme A. This Rickettsia africae (strain ESF-5) protein is Heme A synthase.